Here is a 353-residue protein sequence, read N- to C-terminus: Quinolinate synthase (353 aa).

Residues H47 and S68 each contribute to the iminosuccinate site. C113 contacts [4Fe-4S] cluster. Residues 139–141 (YAN) and S156 contribute to the iminosuccinate site. C200 provides a ligand contact to [4Fe-4S] cluster. Residues 226–228 (HPE) and T243 contribute to the iminosuccinate site. C297 is a binding site for [4Fe-4S] cluster.

The protein belongs to the quinolinate synthase family. Type 1 subfamily. The cofactor is [4Fe-4S] cluster.

It is found in the cytoplasm. The catalysed reaction is iminosuccinate + dihydroxyacetone phosphate = quinolinate + phosphate + 2 H2O + H(+). It functions in the pathway cofactor biosynthesis; NAD(+) biosynthesis; quinolinate from iminoaspartate: step 1/1. Catalyzes the condensation of iminoaspartate with dihydroxyacetone phosphate to form quinolinate. This Vibrio parahaemolyticus serotype O3:K6 (strain RIMD 2210633) protein is Quinolinate synthase.